Reading from the N-terminus, the 337-residue chain is Fructose-1,6-bisphosphatase class 1 (337 aa).

4 residues coordinate Mg(2+): glutamate 92, aspartate 114, leucine 116, and aspartate 117. Substrate contacts are provided by residues 117 to 120 (DGSS), asparagine 209, and lysine 275. A Mg(2+)-binding site is contributed by glutamate 281.

Belongs to the FBPase class 1 family. As to quaternary structure, homotetramer. Mg(2+) is required as a cofactor.

It is found in the cytoplasm. It catalyses the reaction beta-D-fructose 1,6-bisphosphate + H2O = beta-D-fructose 6-phosphate + phosphate. Its pathway is carbohydrate biosynthesis; gluconeogenesis. This Thiobacillus denitrificans (strain ATCC 25259 / T1) protein is Fructose-1,6-bisphosphatase class 1.